The chain runs to 118 residues: V-type proton ATPase subunit G 3 (118 aa).

Polar residues predominate over residues 1–12 (MASQSQGIQQLL). Positions 1–37 (MASQSQGIQQLLQAEKRAKDKLEEAKKRKNKRLRQAK) are disordered. Positions 3–53 (SQSQGIQQLLQAEKRAKDKLEEAKKRKNKRLRQAKEEATADIDQYRLKREG) form a coiled coil. Basic and acidic residues predominate over residues 14-26 (AEKRAKDKLEEAK).

Belongs to the V-ATPase G subunit family. V-ATPase is a heteromultimeric enzyme made up of two complexes: the ATP-hydrolytic V1 complex and the proton translocation V0 complex. The V1 complex consists of three catalytic AB heterodimers that form a heterohexamer, three peripheral stalks each consisting of EG heterodimers, one central rotor including subunits D and F, and the regulatory subunits C and H. The proton translocation complex V0 consists of the proton transport subunit a, a ring of proteolipid subunits c9c'', rotary subunit d, subunits e and f, and two accessory subunits.

Functionally, subunit of the V1 complex of vacuolar(H+)-ATPase (V-ATPase), a multisubunit enzyme composed of a peripheral complex (V1) that hydrolyzes ATP and a membrane integral complex (V0) that translocates protons. V-ATPase is responsible for acidifying and maintaining the pH of intracellular compartments and in some cell types, is targeted to the plasma membrane, where it is responsible for acidifying the extracellular environment. In Xenopus tropicalis (Western clawed frog), this protein is V-type proton ATPase subunit G 3 (atp6v1g3).